A 376-amino-acid chain; its full sequence is Aspartate-semialdehyde dehydrogenase (376 aa).

Residues 11-14 (RGMV), 38-39 (TS), and Gln74 each bind NADP(+). Arg103 is a binding site for phosphate. The active-site Acyl-thioester intermediate is Cys136. Gln163 contacts substrate. Residues 166–167 (SG) and Pro194 each bind NADP(+). A substrate-binding site is contributed by Glu242. Lys245 is a phosphate binding site. Arg273 contacts substrate. The active-site Proton acceptor is the His280. Position 356 (Gln356) interacts with NADP(+).

Belongs to the aspartate-semialdehyde dehydrogenase family. In terms of assembly, homodimer.

The catalysed reaction is L-aspartate 4-semialdehyde + phosphate + NADP(+) = 4-phospho-L-aspartate + NADPH + H(+). It participates in amino-acid biosynthesis; L-lysine biosynthesis via DAP pathway; (S)-tetrahydrodipicolinate from L-aspartate: step 2/4. It functions in the pathway amino-acid biosynthesis; L-methionine biosynthesis via de novo pathway; L-homoserine from L-aspartate: step 2/3. Its pathway is amino-acid biosynthesis; L-threonine biosynthesis; L-threonine from L-aspartate: step 2/5. Its function is as follows. Catalyzes the NADPH-dependent formation of L-aspartate-semialdehyde (L-ASA) by the reductive dephosphorylation of L-aspartyl-4-phosphate. This is Aspartate-semialdehyde dehydrogenase from Bordetella pertussis (strain Tohama I / ATCC BAA-589 / NCTC 13251).